The sequence spans 421 residues: Calreticulin (421 aa).

The first 22 residues, 1-22 (MAFRVPNSSLLSLILLSLLAIA), serve as a signal peptide directing secretion. N-linked (GlcNAc...) asparagine glycosylation occurs at N56. Cysteines 110 and 142 form a disulfide. Residues Y114, K116, Y133, and D140 each coordinate an alpha-D-glucoside. N156 is a glycosylation site (N-linked (GlcNAc...) asparagine). 7 tandem repeats follow at residues 196–207 (KQTGSLYSDWDL), 215–226 (DPEAKKPEDWED), 232–243 (DPEDKKPEGYDD), 250–261 (DPDAKKPEDWDD), 265–275 (GEWTAPTIPNP), 279–289 (GEWKPKKIKNP), and 293–303 (GKWKAPLIDNP). The interval 196-261 (KQTGSLYSDW…DAKKPEDWDD (66 aa)) is 4 X approximate repeats. A disordered region spans residues 217–283 (EAKKPEDWED…NPEYKGEWKP (67 aa)). Residues 223 to 232 (DWEDQEYIPD) are compositionally biased toward acidic residues. Residues 233 to 257 (PEDKKPEGYDDIPKEITDPDAKKPE) show a composition bias toward basic and acidic residues. The tract at residues 265-303 (GEWTAPTIPNPEYKGEWKPKKIKNPNFKGKWKAPLIDNP) is 3 X approximate repeats. E323 contacts an alpha-D-glucoside. Over residues 350 to 380 (EETWGKQKDAEKAAFEELEKKLQEEESKEDP) the composition is skewed to basic and acidic residues. The interval 350-421 (EETWGKQKDA…ETEAEKHDEL (72 aa)) is disordered. Positions 381–399 (VDSDAEDDDNEAEDGEESD) are enriched in acidic residues. A Prevents secretion from ER motif is present at residues 418-421 (HDEL).

This sequence belongs to the calreticulin family.

Its subcellular location is the endoplasmic reticulum lumen. Molecular calcium-binding chaperone promoting folding, oligomeric assembly and quality control in the ER via the calreticulin/calnexin cycle. This lectin may interact transiently with almost all of the monoglucosylated glycoproteins that are synthesized in the ER. This chain is Calreticulin, found in Prunus armeniaca (Apricot).